Reading from the N-terminus, the 138-residue chain is Gas vesicle protein A (138 aa).

The segment at 74 to 138 (EAGPRKDPGL…STSRKKEEQE (65 aa)) is disordered. Positions 116 to 129 (GSSSGSSSGSSSRS) are enriched in low complexity.

The protein belongs to the gas vesicle GvpA family. The gas vesicle shell is 2 nm thick and consists of a single layer of this protein. It forms helical ribs nearly perpendicular to the long axis of the vesicle.

The protein localises to the gas vesicle shell. Gas vesicles are hollow, gas filled proteinaceous nanostructures found in some microorganisms. During planktonic growth they allow positioning of the organism at a favorable depth for light or nutrient acquisition. GvpA forms the protein shell. It is not clear what function gas vesicles perform in soil bacteria. This Streptomyces sp. (strain CB03234) protein is Gas vesicle protein A.